Reading from the N-terminus, the 134-residue chain is Ribosome-binding factor A (134 aa).

It belongs to the RbfA family. Monomer. Binds 30S ribosomal subunits, but not 50S ribosomal subunits or 70S ribosomes.

It localises to the cytoplasm. Its function is as follows. One of several proteins that assist in the late maturation steps of the functional core of the 30S ribosomal subunit. Associates with free 30S ribosomal subunits (but not with 30S subunits that are part of 70S ribosomes or polysomes). Required for efficient processing of 16S rRNA. May interact with the 5'-terminal helix region of 16S rRNA. In Bartonella bacilliformis (strain ATCC 35685 / KC583 / Herrer 020/F12,63), this protein is Ribosome-binding factor A.